The following is a 326-amino-acid chain: Biotin synthase (326 aa).

In terms of domain architecture, Radical SAM core spans 48 to 277 (FGAGKVDLCS…SARIRMAGGR (230 aa)). [4Fe-4S] cluster contacts are provided by cysteine 66, cysteine 70, and cysteine 73. Residues serine 110, cysteine 142, cysteine 202, and arginine 272 each coordinate [2Fe-2S] cluster.

This sequence belongs to the radical SAM superfamily. Biotin synthase family. In terms of assembly, homodimer. [4Fe-4S] cluster serves as cofactor. [2Fe-2S] cluster is required as a cofactor.

The catalysed reaction is (4R,5S)-dethiobiotin + (sulfur carrier)-SH + 2 reduced [2Fe-2S]-[ferredoxin] + 2 S-adenosyl-L-methionine = (sulfur carrier)-H + biotin + 2 5'-deoxyadenosine + 2 L-methionine + 2 oxidized [2Fe-2S]-[ferredoxin]. The protein operates within cofactor biosynthesis; biotin biosynthesis; biotin from 7,8-diaminononanoate: step 2/2. Functionally, catalyzes the conversion of dethiobiotin (DTB) to biotin by the insertion of a sulfur atom into dethiobiotin via a radical-based mechanism. The chain is Biotin synthase from Heliobacterium modesticaldum (strain ATCC 51547 / Ice1).